Reading from the N-terminus, the 332-residue chain is Glycerol-3-phosphate dehydrogenase [NAD(P)+] (332 aa).

NADPH is bound by residues Ser11, Trp12, Arg32, Arg33, and Lys106. Lys106 and Gly136 together coordinate sn-glycerol 3-phosphate. Ala140 serves as a coordination point for NADPH. Lys191, Asp244, Ser254, Arg255, and Asn256 together coordinate sn-glycerol 3-phosphate. Lys191 (proton acceptor) is an active-site residue. NADPH is bound at residue Arg255. Positions 280 and 282 each coordinate NADPH.

Belongs to the NAD-dependent glycerol-3-phosphate dehydrogenase family.

The protein localises to the cytoplasm. The catalysed reaction is sn-glycerol 3-phosphate + NAD(+) = dihydroxyacetone phosphate + NADH + H(+). It carries out the reaction sn-glycerol 3-phosphate + NADP(+) = dihydroxyacetone phosphate + NADPH + H(+). It functions in the pathway membrane lipid metabolism; glycerophospholipid metabolism. Its function is as follows. Catalyzes the reduction of the glycolytic intermediate dihydroxyacetone phosphate (DHAP) to sn-glycerol 3-phosphate (G3P), the key precursor for phospholipid synthesis. This Corynebacterium urealyticum (strain ATCC 43042 / DSM 7109) protein is Glycerol-3-phosphate dehydrogenase [NAD(P)+].